The chain runs to 359 residues: MSGKRSYQDDQLDVEEANKRHQMVDTLLRGSEDKDGDNDNSVYDDLLQDPEEVEKENKENRDGDKVGDDEHDVVKGESEGQAAEQSSADQNDENINVDVDPSVTAVARAAQHASQRREAGDEDEDEDEEEEEDEDDHVDIDDVDKDPDAVIDEDDDEEDEDQAQRRRGKKNIEGTGESNDSERATKIGESGSSNETAGADGSGDREDGSQPDGTEHDDEENGGAGAGGAAPRRGRKPGTETGSTAWKQQRKESHKEVERRRRQNINTAIEKLSDLLPVKETSKAAILSRAAEYIQKMKETETANIEKWTLQKLLGEQQVSSLTSANDKLEQELSKAYKNLEELKKKLKEAGIEDPTEEE.

The tract at residues 1–262 is disordered; the sequence is MSGKRSYQDD…SHKEVERRRR (262 aa). Residues 55–78 show a composition bias toward basic and acidic residues; it reads KENKENRDGDKVGDDEHDVVKGES. The segment covering 120–161 has biased composition (acidic residues); that stretch reads GDEDEDEDEEEEEDEDDHVDIDDVDKDPDAVIDEDDDEEDED. A compositionally biased stretch (basic and acidic residues) spans 249 to 259; the sequence is QRKESHKEVER. Positions 249–297 constitute a bHLH domain; that stretch reads QRKESHKEVERRRRQNINTAIEKLSDLLPVKETSKAAILSRAAEYIQKM.

Binds DNA as a dimer.

It is found in the nucleus. The protein localises to the chromosome. The protein resides in the centromere. Required for chromosome stability and methionine prototrophy. It is involved in chromosomal segregation. Binds to a highly conserved DNA sequence (5'-RTCACRTG-3'), called CDEI, found in centromeres and in several promoters. The sequence is that of Centromere-binding protein 1 (CBF1) from Kluyveromyces lactis (strain ATCC 8585 / CBS 2359 / DSM 70799 / NBRC 1267 / NRRL Y-1140 / WM37) (Yeast).